The following is a 168-amino-acid chain: CDP-archaeol synthase (168 aa).

5 helical membrane passes run Pro-7–Leu-27, Gly-55–Cys-75, Tyr-80–Ile-100, Gly-109–Tyr-129, and Ala-130–Leu-150.

It belongs to the CDP-archaeol synthase family. Mg(2+) is required as a cofactor.

The protein resides in the cell membrane. It carries out the reaction 2,3-bis-O-(geranylgeranyl)-sn-glycerol 1-phosphate + CTP + H(+) = CDP-2,3-bis-O-(geranylgeranyl)-sn-glycerol + diphosphate. Its pathway is membrane lipid metabolism; glycerophospholipid metabolism. Catalyzes the formation of CDP-2,3-bis-(O-geranylgeranyl)-sn-glycerol (CDP-archaeol) from 2,3-bis-(O-geranylgeranyl)-sn-glycerol 1-phosphate (DGGGP) and CTP. This reaction is the third ether-bond-formation step in the biosynthesis of archaeal membrane lipids. In Hyperthermus butylicus (strain DSM 5456 / JCM 9403 / PLM1-5), this protein is CDP-archaeol synthase.